The following is a 66-amino-acid chain: UPF0391 membrane protein AM1_5042 (66 aa).

The next 2 membrane-spanning stretches (helical) occupy residues 4–24 (LTLT…SGIA) and 28–47 (AAIA…LVWP).

It belongs to the UPF0391 family.

It localises to the cell membrane. The sequence is that of UPF0391 membrane protein AM1_5042 from Acaryochloris marina (strain MBIC 11017).